We begin with the raw amino-acid sequence, 131 residues long: Small ribosomal subunit protein uS8 (131 aa).

Belongs to the universal ribosomal protein uS8 family. In terms of assembly, part of the 30S ribosomal subunit. Contacts proteins S5 and S12.

Its function is as follows. One of the primary rRNA binding proteins, it binds directly to 16S rRNA central domain where it helps coordinate assembly of the platform of the 30S subunit. The protein is Small ribosomal subunit protein uS8 of Thiobacillus denitrificans (strain ATCC 25259 / T1).